Reading from the N-terminus, the 250-residue chain is MFSLPLSLPLCEDTAFLPSKCCSSHKTIKQARTLIMIFLASGTHFQTMLKSKLNVLTLKKEPLPAVIFHEPEAIELCTTTPLMKTRTHSGCKVTYLGKVSTTGMQFLSGCTEKPVIELWKKHTLAREDVFPANALLEIRPFQVWLHHLDHKGEATVHMDTFQVARIAYCTADHNVSPNIFAWVYREINDDLSYQMDCHAVECESKLEAKKLAHAMMEAFRKTFHSMKSDGRIHSNSSSEEVSQELESDDG.

In terms of domain architecture, PID spans 93–250 (VTYLGKVSTT…VSQELESDDG (158 aa)). A disordered region spans residues 229–250 (DGRIHSNSSSEEVSQELESDDG). Residues serine 236 and serine 247 each carry the phosphoserine modification. The segment covering 241–250 (VSQELESDDG) has biased composition (acidic residues).

Found in a complex with PID1/PCLI1, LRP1 and CUBNI. Interacts with LRP1 and CUBN. In terms of tissue distribution, expressed in subcutaneous fat, heart, skeletal muscle, brain, colon, thymus, spleen, kidney, liver, small intestine, placenta, lung and peripheral blood leukocyte.

Its subcellular location is the cytoplasm. In terms of biological role, increases proliferation of preadipocytes without affecting adipocytic differentiation. The sequence is that of PTB-containing, cubilin and LRP1-interacting protein (PID1) from Homo sapiens (Human).